Reading from the N-terminus, the 310-residue chain is Ribosomal RNA small subunit methyltransferase H (310 aa).

Residues 32 to 34 (GGH), Asp52, Phe79, Asp100, and Gln107 each bind S-adenosyl-L-methionine.

Belongs to the methyltransferase superfamily. RsmH family.

It is found in the cytoplasm. It carries out the reaction cytidine(1402) in 16S rRNA + S-adenosyl-L-methionine = N(4)-methylcytidine(1402) in 16S rRNA + S-adenosyl-L-homocysteine + H(+). In terms of biological role, specifically methylates the N4 position of cytidine in position 1402 (C1402) of 16S rRNA. The polypeptide is Ribosomal RNA small subunit methyltransferase H (Bacillus cereus (strain AH187)).